The chain runs to 401 residues: cAMP-dependent protein kinase type II-alpha regulatory subunit (401 aa).

The residue at position 2 (serine 2) is an N-acetylserine. Residues 2-135 (SHIQIPPGLT…RLQEACKDIL (134 aa)) are dimerization and phosphorylation. Phosphoserine is present on residues serine 47, serine 74, serine 76, and serine 96. The interval 61–83 (ESSAVPVIEEDGESDSDSEDADL) is disordered. A compositionally biased stretch (acidic residues) spans 68–83 (IEEDGESDSDSEDADL). Residues 136–257 (LFKN…ESVP), glutamate 205, arginine 214, 258–401 (LFKS…DPGQ), glutamate 335, and arginine 344 contribute to the 3',5'-cyclic AMP site. A Phosphothreonine; by PDPK1 modification is found at threonine 212. 2 positions are modified to phosphoserine: serine 347 and serine 392.

Belongs to the cAMP-dependent kinase regulatory chain family. In terms of assembly, the inactive form of the enzyme is composed of two regulatory chains and two catalytic chains. Activation by cAMP produces two active catalytic monomers and a regulatory dimer that binds four cAMP molecules. Interacts with AKAP4. Interacts with CBFA2T3. Interacts with the phosphorylated form of PJA2. Interacts with MYRIP. This interaction may link PKA to components of the exocytosis machinery, thus facilitating exocytosis, including insulin release. Forms a complex composed of PRKAR2A, GSK3B and GSKIP through GSKIP interaction; facilitates PKA-induced phosphorylation and regulates GSK3B activity. Interacts with ADCY8; inhibits adenylate cyclase activity through PKA phosphorylation. Post-translationally, phosphorylated by the activated catalytic chain. Four types of regulatory chains are found: I-alpha, I-beta, II-alpha, and II-beta. Their expression varies among tissues and is in some cases constitutive and in others inducible.

It is found in the cytoplasm. The protein localises to the cell membrane. In terms of biological role, regulatory subunit of the cAMP-dependent protein kinases involved in cAMP signaling in cells. Type II regulatory chains mediate membrane association by binding to anchoring proteins, including the MAP2 kinase. This is cAMP-dependent protein kinase type II-alpha regulatory subunit (Prkar2a) from Mus musculus (Mouse).